A 562-amino-acid chain; its full sequence is Protein wntless (562 aa).

Residues 1–13 are Cytoplasmic-facing; the sequence is MSGTILENLSGRK. The chain crosses the membrane as a helical span at residues 14–34; it reads LSILVGSLLLCQVLCFLLGGL. Over 35–239 the chain is Lumenal; that stretch reads YAPVPAGHTN…AIHQNGGFTH (205 aa). A glycan (N-linked (GlcNAc...) asparagine) is linked at Asn-58. The chain crosses the membrane as a helical span at residues 240 to 260; it reads VWLMLKTLLFPFVVGIMVWFW. Topologically, residues 261–270 are cytoplasmic; it reads RRVHLLQRSP. The helical transmembrane segment at 271 to 291 threads the bilayer; sequence ALLEYMLLYLGGALTFLNLPL. Residues 292-311 lie on the Lumenal side of the membrane; the sequence is EYLSLTIEMPYMLLLSDIRQ. A helical transmembrane segment spans residues 312 to 332; the sequence is GIFYAMLLSFWLVFAGEHMLI. At 333–344 the chain is on the cytoplasmic side; it reads QDSSNKSTIRSR. A helical transmembrane segment spans residues 345 to 365; sequence YWKHLSAVVVGCISLFVFDIS. The Lumenal segment spans residues 366–386; that stretch reads ERGVQLRNPFYSIWTTPLGAK. Residues 387–407 form a helical membrane-spanning segment; that stretch reads VAMSFILLAGVSAAVYFLFLC. The Cytoplasmic portion of the chain corresponds to 408–441; sequence YMISKVFKNIGDKRTSLPSMSQARRLHYEGLIYR. The helical transmembrane segment at 442–462 threads the bilayer; that stretch reads FKFLMLATLLCAALTVTGFIM. Over 463–482 the chain is Lumenal; that stretch reads GQMAEGQWKWNDDVEIQLTS. A helical membrane pass occupies residues 483-503; sequence AFLTGVYGMWNIYIFALLILY. Over 504-562 the chain is Cytoplasmic; it reads APSHKQWPTMHHSDETTQSNENIVASAASEEIEFSNLPSDSNPSEISSLTSFTRKVAFE. The tract at residues 538 to 562 is disordered; it reads SNLPSDSNPSEISSLTSFTRKVAFE. Positions 539 to 556 are enriched in polar residues; the sequence is NLPSDSNPSEISSLTSFT.

This sequence belongs to the wntless family. In terms of assembly, interacts with wg; in the Golgi. Interacts with Vps35, a component of the retromer complex; wls stability is regulated by Vps35.

It localises to the presynaptic cell membrane. Its subcellular location is the postsynaptic cell membrane. The protein localises to the cell membrane. It is found in the endoplasmic reticulum membrane. The protein resides in the endosome membrane. It localises to the golgi apparatus membrane. Its function is as follows. A segment polarity gene required for wingless (wg)-dependent patterning processes, acting in both wg-sending cells and wg-target cells. In non-neuronal cells wls directs wg secretion. The wls traffic loop encompasses the Golgi, the cell surface, an endocytic compartment and a retrograde route leading back to the Golgi, and involves clathrin-mediated endocytosis and the retromer complex (a conserved protein complex consisting of Vps35 and Vps26). In neuronal cells (the larval motorneuron NMJ), the wg signal moves across the synapse via the release of wls-containing exosome-like vesicles. Postsynaptic wls is required for the trafficking of fz2 through the fz2-interacting protein Grip. In Drosophila pseudoobscura pseudoobscura (Fruit fly), this protein is Protein wntless.